Reading from the N-terminus, the 1502-residue chain is Gem-associated protein 5 (1502 aa).

An important for interaction with U1 snRNA region spans residues 1-124 (MKPEPRTLPP…LHWSPTVKDL (124 aa)). Residues 13-15 (NWY) form an interaction with U4 snRNA region. Phosphoserine is present on serine 48. WD repeat units lie at residues 62–104 (GHTE…VVTE), 107–148 (LHQH…QHLF), 150–189 (EPRT…EVIH), 193–264 (GHDD…GVMV), 280–321 (TVKE…RRKY), 333–374 (HSRI…CCWT), 377–417 (SLGG…NNYD), 424–464 (GVKS…PPQI), 468–509 (YHKK…VVLQ), 533–573 (RYKL…LLCT), and 576–622 (QHHK…ESNP). The residue at position 624 (serine 624) is a Phosphoserine. WD repeat units lie at residues 637 to 677 (GHTA…PLFN) and 680 to 720 (GHRG…HSRP). Disordered regions lie at residues 740–797 (KLKK…SPVV) and 819–838 (SSKA…EALL). Lysine 754 participates in a covalent cross-link: Glycyl lysine isopeptide (Lys-Gly) (interchain with G-Cter in SUMO2). Phosphoserine is present on residues serine 757, serine 770, and serine 778. Over residues 825 to 838 (LKKEPAKEKPEALL) the composition is skewed to basic and acidic residues. Serine 845 bears the Phosphoserine mark. Disordered regions lie at residues 1309-1338 (VSDK…LSAE) and 1378-1427 (HQKS…SLPE). Positions 1355–1382 (ASLQTSQRTVAEVQETLAEMIRQHQKSQ) form a coiled coil. Over residues 1380-1391 (KSQLCKATTNGP) the composition is skewed to polar residues. The span at 1392–1407 (SRDEPSRDEPSQEAER) shows a compositional bias: basic and acidic residues.

It belongs to the WD repeat gemin-5 family. As to quaternary structure, part of the core SMN complex that contains SMN1, GEMIN2/SIP1, DDX20/GEMIN3, GEMIN4, GEMIN5, GEMIN6, GEMIN7, GEMIN8 and STRAP/UNRIP. Part of the SMN-Sm complex that contains SMN1, GEMIN2/SIP1, DDX20/GEMIN3, GEMIN4, GEMIN5, GEMIN6, GEMIN7, GEMIN8, STRAP/UNRIP and the Sm proteins SNRPB, SNRPD1, SNRPD2, SNRPD3, SNRPE, SNRPF and SNRPG. Interacts directly with SMN1, SNRPB, SNRPD1, SNRPD2, SNRPD3 and SNRPE. Identified in a SMN complex that contains GEMIN2/SIP1. Interacts with cytosolic DDX20/GEMIN3 and GEMIN4. Interacts with SNRNP70 and HNRNPU. Identified in a complex with 80S ribosomes; binds to the 60S large ribosomal subunit. Interacts with the ribosomal subunits RPL3 and RPL4.

The protein localises to the nucleus. It is found in the nucleoplasm. The protein resides in the gem. It localises to the cytoplasm. The SMN complex catalyzes the assembly of small nuclear ribonucleoproteins (snRNPs), the building blocks of the spliceosome, and thereby plays an important role in the splicing of cellular pre-mRNAs. Most spliceosomal snRNPs contain a common set of Sm proteins SNRPB, SNRPD1, SNRPD2, SNRPD3, SNRPE, SNRPF and SNRPG that assemble in a heptameric protein ring on the Sm site of the small nuclear RNA to form the core snRNP (Sm core). In the cytosol, the Sm proteins SNRPD1, SNRPD2, SNRPE, SNRPF and SNRPG are trapped in an inactive 6S pICln-Sm complex by the chaperone CLNS1A that controls the assembly of the core snRNP. To assemble core snRNPs, the SMN complex accepts the trapped 5Sm proteins from CLNS1A forming an intermediate. Binding of snRNA inside 5Sm ultimately triggers eviction of the SMN complex, thereby allowing binding of SNRPD3 and SNRPB to complete assembly of the core snRNP. Within the SMN complex, GEMIN5 recognizes and delivers the small nuclear RNAs (snRNAs) to the SMN complex. Binds to the 7-methylguanosine cap of RNA molecules. Binds to the 3'-UTR of SMN1 mRNA and regulates its translation; does not affect mRNA stability. May play a role in the regulation of protein synthesis via its interaction with ribosomes. The polypeptide is Gem-associated protein 5 (Gemin5) (Mus musculus (Mouse)).